A 72-amino-acid chain; its full sequence is Large ribosomal subunit protein bL31 (72 aa).

4 residues coordinate Zn(2+): Cys16, Cys18, Cys37, and Cys40.

It belongs to the bacterial ribosomal protein bL31 family. Type A subfamily. In terms of assembly, part of the 50S ribosomal subunit. The cofactor is Zn(2+).

In terms of biological role, binds the 23S rRNA. In Hahella chejuensis (strain KCTC 2396), this protein is Large ribosomal subunit protein bL31.